A 492-amino-acid polypeptide reads, in one-letter code: Glutamyl-tRNA(Gln) amidotransferase subunit A (492 aa).

Active-site charge relay system residues include Lys79 and Ser154. The Acyl-ester intermediate role is filled by Ser178.

It belongs to the amidase family. GatA subfamily. Heterotrimer of A, B and C subunits.

The enzyme catalyses L-glutamyl-tRNA(Gln) + L-glutamine + ATP + H2O = L-glutaminyl-tRNA(Gln) + L-glutamate + ADP + phosphate + H(+). Allows the formation of correctly charged Gln-tRNA(Gln) through the transamidation of misacylated Glu-tRNA(Gln) in organisms which lack glutaminyl-tRNA synthetase. The reaction takes place in the presence of glutamine and ATP through an activated gamma-phospho-Glu-tRNA(Gln). This chain is Glutamyl-tRNA(Gln) amidotransferase subunit A, found in Acinetobacter baumannii (strain AB0057).